Here is a 181-residue protein sequence, read N- to C-terminus: Ras-like protein 1 (181 aa).

10–17 (GAGGVGKS) lines the GTP pocket. An Effector region motif is present at residues 32–40 (YDPTIEDSY). GTP-binding positions include 57-61 (DTAGQ) and 116-119 (NKCD). Cys178 carries the cysteine methyl ester modification. The S-geranylgeranyl cysteine moiety is linked to residue Cys178. Positions 179–181 (KML) are cleaved as a propeptide — removed in mature form.

Belongs to the small GTPase superfamily. Ras family.

It is found in the cell membrane. It catalyses the reaction GTP + H2O = GDP + phosphate + H(+). Its activity is regulated as follows. Alternates between an inactive form bound to GDP and an active form bound to GTP. Activated by a guanine nucleotide-exchange factor (GEF) and inactivated by a GTPase-activating protein (GAP). Ras proteins bind GDP/GTP and possess intrinsic GTPase activity. Plays a role in eye development by regulating cell growth, survival of postmitotic ommatidial cells and differentiation of photoreceptor cells. During larval development, mediates Ptth/tor signaling leading to the production of ecdysone, a hormone required for the initiation of metamorphosis. The chain is Ras-like protein 1 from Drosophila mojavensis (Fruit fly).